The following is a 306-amino-acid chain: Putative S-adenosyl-L-methionine-dependent methyltransferase FRAAL5401 (306 aa).

Residues Asp126 and 155–156 (DL) contribute to the S-adenosyl-L-methionine site. Residues 201-225 (LSAPESRVATENRPNPKPGDEDRTK) form a disordered region.

It belongs to the UPF0677 family.

Its function is as follows. Exhibits S-adenosyl-L-methionine-dependent methyltransferase activity. This Frankia alni (strain DSM 45986 / CECT 9034 / ACN14a) protein is Putative S-adenosyl-L-methionine-dependent methyltransferase FRAAL5401.